The chain runs to 414 residues: Esterase FrsA (414 aa).

The protein belongs to the FrsA family.

The catalysed reaction is a carboxylic ester + H2O = an alcohol + a carboxylate + H(+). In terms of biological role, catalyzes the hydrolysis of esters. The sequence is that of Esterase FrsA from Klebsiella pneumoniae subsp. pneumoniae (strain ATCC 700721 / MGH 78578).